We begin with the raw amino-acid sequence, 150 residues long: Endoribonuclease YbeY (150 aa).

The Zn(2+) site is built by His-113, His-117, and His-123.

This sequence belongs to the endoribonuclease YbeY family. Zn(2+) serves as cofactor.

Its subcellular location is the cytoplasm. Its function is as follows. Single strand-specific metallo-endoribonuclease involved in late-stage 70S ribosome quality control and in maturation of the 3' terminus of the 16S rRNA. The sequence is that of Endoribonuclease YbeY from Malacoplasma penetrans (strain HF-2) (Mycoplasma penetrans).